The primary structure comprises 444 residues: Tol-Pal system protein TolB (444 aa).

Positions 1–19 (MRNIIYFILSLLFSFASYA) are cleaved as a signal peptide.

It belongs to the TolB family. The Tol-Pal system is composed of five core proteins: the inner membrane proteins TolA, TolQ and TolR, the periplasmic protein TolB and the outer membrane protein Pal. They form a network linking the inner and outer membranes and the peptidoglycan layer.

It is found in the periplasm. Functionally, part of the Tol-Pal system, which plays a role in outer membrane invagination during cell division and is important for maintaining outer membrane integrity. The sequence is that of Tol-Pal system protein TolB from Rickettsia massiliae (strain Mtu5).